Here is a 429-residue protein sequence, read N- to C-terminus: Glutamyl-tRNA reductase (429 aa).

Substrate-binding positions include 49–52 (TCNR), serine 107, 112–114 (EPQ), and glutamine 118. The active-site Nucleophile is the cysteine 50. An NADP(+)-binding site is contributed by 187-192 (GAGKTI).

Belongs to the glutamyl-tRNA reductase family. Homodimer.

The catalysed reaction is (S)-4-amino-5-oxopentanoate + tRNA(Glu) + NADP(+) = L-glutamyl-tRNA(Glu) + NADPH + H(+). It participates in porphyrin-containing compound metabolism; protoporphyrin-IX biosynthesis; 5-aminolevulinate from L-glutamyl-tRNA(Glu): step 1/2. Functionally, catalyzes the NADPH-dependent reduction of glutamyl-tRNA(Glu) to glutamate 1-semialdehyde (GSA). This is Glutamyl-tRNA reductase from Marinobacter nauticus (strain ATCC 700491 / DSM 11845 / VT8) (Marinobacter aquaeolei).